Reading from the N-terminus, the 193-residue chain is Putative manganese efflux pump MntP (193 aa).

A run of 6 helical transmembrane segments spans residues 6 to 26, 41 to 61, 65 to 85, 107 to 127, 132 to 152, and 169 to 189; these read LLGL…AVGI, YHFG…GTGI, TQSY…ANMI, LIIL…SLSM, IWYP…FGML, and VLGG…NGVF.

The protein belongs to the MntP (TC 9.B.29) family.

The protein localises to the cell inner membrane. Probably functions as a manganese efflux pump. This Desulfotalea psychrophila (strain LSv54 / DSM 12343) protein is Putative manganese efflux pump MntP.